Here is a 310-residue protein sequence, read N- to C-terminus: tRNA dimethylallyltransferase (310 aa).

Residue G12 to T19 participates in ATP binding. Residue T14–T19 coordinates substrate. The tract at residues D37–M40 is interaction with substrate tRNA.

The protein belongs to the IPP transferase family. Monomer. It depends on Mg(2+) as a cofactor.

The enzyme catalyses adenosine(37) in tRNA + dimethylallyl diphosphate = N(6)-dimethylallyladenosine(37) in tRNA + diphosphate. Functionally, catalyzes the transfer of a dimethylallyl group onto the adenine at position 37 in tRNAs that read codons beginning with uridine, leading to the formation of N6-(dimethylallyl)adenosine (i(6)A). The protein is tRNA dimethylallyltransferase of Desulforudis audaxviator (strain MP104C).